Reading from the N-terminus, the 171-residue chain is MSGSVAAGAAAGPVPPAQEEGMTWWYRWLCRLAGVLGAVSCAISGLFNCVTIHPLNIAAGVWMIMNAFILLLCEAPFCCQFVEFANTVAEKVDRLRSWQKAVFYCGMAIVPIVMSLTLTTLLGNAIAFATGVLYGLSALGKKGDAISYARIQQQRQQADEEKLAETFEGEL.

Over 1-31 (MSGSVAAGAAAGPVPPAQEEGMTWWYRWLCR) the chain is Cytoplasmic. A helical transmembrane segment spans residues 32–52 (LAGVLGAVSCAISGLFNCVTI). Residues 53-56 (HPLN) are Extracellular-facing. Residues 57-77 (IAAGVWMIMNAFILLLCEAPF) form a helical membrane-spanning segment. Residues 78 to 101 (CCQFVEFANTVAEKVDRLRSWQKA) are Cytoplasmic-facing. The helical transmembrane segment at 102-122 (VFYCGMAIVPIVMSLTLTTLL) threads the bilayer. Residues 123-124 (GN) are Extracellular-facing. Residues 125 to 141 (AIAFATGVLYGLSALGK) form a helical membrane-spanning segment. Residues 142–171 (KGDAISYARIQQQRQQADEEKLAETFEGEL) are Cytoplasmic-facing.

Belongs to the calcium channel flower family. As to quaternary structure, interacts with adaptor protein complex 2 (AP-2). As to expression, expressed in calyces in the brain (at protein level). Detected in cultured hippocampal neurons (at protein level).

Its subcellular location is the cell membrane. The protein resides in the cytoplasmic vesicle. It localises to the secretory vesicle. It is found in the synaptic vesicle. The protein localises to the golgi apparatus. Its subcellular location is the vesicle. Its function is as follows. Transmembrane protein which mediates synaptic endocytosis and fitness-based cell culling. In response to different stimulus strengths, controls two major modes of synaptic vesicle (SV) retrieval in hippocampal neurons; Clathrin-mediated endocytosis (CME) in response to mild stimulation and activity-dependent bulk endocytosis (ADBE) in response to strong stimulation. In cytotoxic T-lymphoocytes (CTLs) facilitates calcium-dependent endocytosis of cytotoxic granules (CGs) at the immuno synapse. Different isoforms work as fitness fingerprints in 'loser' and 'winner' cells and thereby mediate win/lose decisions as part of the cell competition process. In Rattus norvegicus (Rat), this protein is Calcium channel flower homolog (Cacfd1).